The chain runs to 1084 residues: Myosin heavy chain, skeletal muscle (1084 aa).

Disordered regions lie at residues 1–20 (SAET…KTKE), 270–292 (EIEA…SREL), and 298–317 (RLEE…KKRE). Residues 1–258 (SAETEKEMAN…SKIEDEQALM (258 aa)) are alpha-helical tailpiece (S2). The segment at 259–1084 (TNLQRIEELE…DVHSKVISEE (826 aa)) is rodlike tail (S2 and LMM domains). Residues 273–292 (AERASRAKAEKQRSDLSREL) are compositionally biased toward basic and acidic residues. Positions 455 to 1084 (QAFTQQIEGL…DVHSKVISEE (630 aa)) form a coiled coil.

Muscle myosin is a hexameric protein that consists of 2 heavy chain subunits (MHC), 2 alkali light chain subunits (MLC) and 2 regulatory light chain subunits (MLC-2).

Its subcellular location is the cytoplasm. The protein resides in the myofibril. Its function is as follows. Muscle contraction. This Oryctolagus cuniculus (Rabbit) protein is Myosin heavy chain, skeletal muscle.